The primary structure comprises 242 residues: MIKEINIKIKNFEGPLDLLLHLVSQYEMDIFEVPLVPVIEQYLIYIQTMKELELEVAGEYMLMASQLMLIKSRRLLPTVTETFIEDTEQLEYDLLAQIDEYRKYKMLSQDLDELHQERSHFYSKAKTEIITDETVLLQDKSALDLFLAFTKILELQRQHFQDENTKIAAEKFTIADKILELSTRFTEQKICKFSDLFSSSTNKDELVTTFMALLELIKNQQISFSQGELFGEIILERKETSE.

This sequence belongs to the ScpA family. Component of a cohesin-like complex composed of ScpA, ScpB and the Smc homodimer, in which ScpA and ScpB bind to the head domain of Smc. The presence of the three proteins is required for the association of the complex with DNA.

The protein resides in the cytoplasm. In terms of biological role, participates in chromosomal partition during cell division. May act via the formation of a condensin-like complex containing Smc and ScpB that pull DNA away from mid-cell into both cell halves. This chain is Segregation and condensation protein A, found in Lactococcus lactis subsp. lactis (strain IL1403) (Streptococcus lactis).